The sequence spans 118 residues: Ribonuclease P protein component (118 aa).

Belongs to the RnpA family. In terms of assembly, consists of a catalytic RNA component (M1 or rnpB) and a protein subunit.

It carries out the reaction Endonucleolytic cleavage of RNA, removing 5'-extranucleotides from tRNA precursor.. Functionally, RNaseP catalyzes the removal of the 5'-leader sequence from pre-tRNA to produce the mature 5'-terminus. It can also cleave other RNA substrates such as 4.5S RNA. The protein component plays an auxiliary but essential role in vivo by binding to the 5'-leader sequence and broadening the substrate specificity of the ribozyme. The chain is Ribonuclease P protein component from Enterococcus faecalis (strain ATCC 700802 / V583).